Consider the following 130-residue polypeptide: Small ribosomal subunit protein uS9 (130 aa).

Belongs to the universal ribosomal protein uS9 family.

The polypeptide is Small ribosomal subunit protein uS9 (Aeromonas hydrophila subsp. hydrophila (strain ATCC 7966 / DSM 30187 / BCRC 13018 / CCUG 14551 / JCM 1027 / KCTC 2358 / NCIMB 9240 / NCTC 8049)).